The primary structure comprises 1457 residues: NBPF family member NBPF12 (1457 aa).

Residues 75–119 adopt a coiled-coil conformation; it reads RQFKEEKLAEQLKQAEELRQYKVLVHSQERELTQLREKLREGRDA. Positions 162–200 are disordered; sequence LSPENDEDEDEDVQVEEDEKVLESSAPREVQKAEESKVP. Residues 165–181 show a composition bias toward acidic residues; sequence ENDEDEDEDVQVEEDEK. Residues 165–259 enclose the Olduvai 1 domain; the sequence is ENDEDEDEDV…ECQDALNILP (95 aa). Basic and acidic residues predominate over residues 190–200; sequence EVQKAEESKVP. Positions 339–390 form a coiled coil; it reads KSMLRNELQFKEEKLAEQLKQAEELRQYKVLVHSQERELTQLREKLREGRDA. The interval 432 to 472 is disordered; it reads KLSPENDEDEDEDVQVEEDEKVLESSSPREMQKAEESKVPE. The segment covering 436 to 452 has biased composition (acidic residues); it reads ENDEDEDEDVQVEEDEK. The Olduvai 2 domain occupies 436 to 530; that stretch reads ENDEDEDEDV…ECQDALNILP (95 aa). The segment covering 461-472 has biased composition (basic and acidic residues); sequence EMQKAEESKVPE. Residues 610-661 adopt a coiled-coil conformation; the sequence is KSMLRNELQFKEEKLAEQLKQAEELRQYKVLVHSQERELTQLREKLREGRDA. Olduvai domains follow at residues 707-799, 800-871, 872-963, 966-1021, 1022-1114, 1115-1207, 1210-1265, 1266-1358, and 1359-1457; these read ENDN…HIIP, ENES…VDIG, RHRW…PSCP, SREL…LDVD, RIKK…RSKK, KRRR…PSCP, and KRRR…IFPQ. 2 disordered regions span residues 721 to 746 and 791 to 838; these read AEKVQKSSSPREMQKAEEKEVPEDSL and WEDA…GYST. 2 stretches are compositionally biased toward acidic residues: residues 801 to 810 and 821 to 833; these read NESDDEEEEE and ESEEEEVPQESWD. Residues 1100–1139 form a disordered region; the sequence is KKGKGKKRRGRRSKKKRRRGRKEGEEDQNPPCPRLSRELL. The span at 1102-1120 shows a compositional bias: basic residues; the sequence is GKGKKRRGRRSKKKRRRGR. Residues 1344–1378 form a disordered region; that stretch reads KKGKGKKRRGRRSKKKRRRGRKEGEEDQNPPCPRL. The segment covering 1346–1364 has biased composition (basic residues); sequence GKGKKRRGRRSKKKRRRGR.

The protein belongs to the NBPF family. In terms of tissue distribution, widely expressed with highest levels in brain, ovary, mammary gland, skin and adipose tissue. Also expressed in testis. Detected in a number of tumors including osteosarcoma, mammary carcinoma and hepatocellular carcinoma.

The protein localises to the cytoplasm. This is NBPF family member NBPF12 from Homo sapiens (Human).